We begin with the raw amino-acid sequence, 355 residues long: Protein RecA (355 aa).

65-72 contacts ATP; the sequence is GPESSGKT.

This sequence belongs to the RecA family.

The protein resides in the cytoplasm. Functionally, can catalyze the hydrolysis of ATP in the presence of single-stranded DNA, the ATP-dependent uptake of single-stranded DNA by duplex DNA, and the ATP-dependent hybridization of homologous single-stranded DNAs. It interacts with LexA causing its activation and leading to its autocatalytic cleavage. The polypeptide is Protein RecA (Pseudomonas putida (Arthrobacter siderocapsulatus)).